The chain runs to 265 residues: Novel plant SNARE 12 (265 aa).

Over Met-1–Cys-217 the chain is Cytoplasmic. Positions Leu-32–Leu-106 form a coiled coil. Residue Ser-74 is modified to Phosphoserine. Residues Met-146–Ile-208 enclose the t-SNARE coiled-coil homology domain. Residues Ile-218–Val-238 traverse the membrane as a helical; Anchor for type IV membrane protein segment. The Vesicular portion of the chain corresponds to Asn-239–Glu-265.

This sequence belongs to the novel plant SNARE family. In terms of tissue distribution, expressed in roots, stems, flower, siliques and leaves.

Its subcellular location is the membrane. In terms of biological role, vesicle trafficking protein that functions in the secretory pathway. The sequence is that of Novel plant SNARE 12 (NPSN12) from Arabidopsis thaliana (Mouse-ear cress).